The sequence spans 115 residues: UPF0597 protein HI_0855 (115 aa).

Belongs to the UPF0597 family.

The protein is UPF0597 protein HI_0855 of Haemophilus influenzae (strain ATCC 51907 / DSM 11121 / KW20 / Rd).